A 277-amino-acid chain; its full sequence is Large ribosomal subunit protein uL2 (277 aa).

Disordered regions lie at residues 35–57 and 222–277; these read RPLH…QGGG and GVAM…NRRR. 2 stretches are compositionally biased toward basic residues: residues 37–57 and 268–277; these read LHSK…QGGG and VRRRKQNRRR.

Belongs to the universal ribosomal protein uL2 family. Part of the 50S ribosomal subunit. Forms a bridge to the 30S subunit in the 70S ribosome.

Its function is as follows. One of the primary rRNA binding proteins. Required for association of the 30S and 50S subunits to form the 70S ribosome, for tRNA binding and peptide bond formation. It has been suggested to have peptidyltransferase activity; this is somewhat controversial. Makes several contacts with the 16S rRNA in the 70S ribosome. The protein is Large ribosomal subunit protein uL2 of Frankia casuarinae (strain DSM 45818 / CECT 9043 / HFP020203 / CcI3).